The chain runs to 261 residues: MSTLSFNNISTEVLSPLNQFEIRDLLSIDALGNLHISITNIGFYLTIGAFFFLVINLLSINYNRLVSNSWSISQESLYATIHSIVTSQINPRNGQIYFPFIYTLFIFILINNLIGMVPYSFASTSHFVVTFALSFTIVLGATILGFQKHGLEFFSLLVPAGCPLALLPLLVLIEFISYLARNISLGLRLAANILSGHMLLHILAGFTYNIMTSGIIFFFLGLIPLAFIIAFSGLELGIAFIQAQVFVVLTSGYIKDALDLH.

Positions 1 to 14 (MSTLSFNNISTEVL) are cleaved as a propeptide — removed in mature form. The next 7 helical transmembrane spans lie at 38–58 (ITNIGFYLTIGAFFFLVINLL), 96–116 (IYFPFIYTLFIFILINNLIGM), 126–146 (HFVVTFALSFTIVLGATILGF), 153–173 (FFSLLVPAGCPLALLPLLVLI), 191–211 (ANILSGHMLLHILAGFTYNIM), 214–234 (GIIFFFLGLIPLAFIIAFSGL), and 235–255 (ELGIAFIQAQVFVVLTSGYIK).

It belongs to the ATPase A chain family. As to quaternary structure, F-type ATPases have 2 components, CF(1) - the catalytic core - and CF(0) - the membrane proton channel. CF(1) has five subunits: alpha(3), beta(3), gamma(1), delta(1), epsilon(1). CF(0) has three main subunits: a, b and c.

The protein localises to the mitochondrion inner membrane. In terms of biological role, mitochondrial membrane ATP synthase (F(1)F(0) ATP synthase or Complex V) produces ATP from ADP in the presence of a proton gradient across the membrane which is generated by electron transport complexes of the respiratory chain. F-type ATPases consist of two structural domains, F(1) - containing the extramembraneous catalytic core and F(0) - containing the membrane proton channel, linked together by a central stalk and a peripheral stalk. During catalysis, ATP synthesis in the catalytic domain of F(1) is coupled via a rotary mechanism of the central stalk subunits to proton translocation. Key component of the proton channel; it may play a direct role in the translocation of protons across the membrane. This Neurospora crassa (strain ATCC 24698 / 74-OR23-1A / CBS 708.71 / DSM 1257 / FGSC 987) protein is ATP synthase subunit a (atp-6).